The chain runs to 398 residues: Elongation factor Tu (398 aa).

Residues 10–207 form the tr-type G domain; that stretch reads KPHVNIGTIG…TVDEYIPEPE (198 aa). The segment at 19-26 is G1; it reads GHVDHGKT. 19-26 lines the GTP pocket; that stretch reads GHVDHGKT. Residue T26 coordinates Mg(2+). The tract at residues 63–67 is G2; it reads GITIN. Positions 84-87 are G3; it reads DAPG. GTP contacts are provided by residues 84–88 and 139–142; these read DAPGH and NKVD. A G4 region spans residues 139 to 142; the sequence is NKVD. A G5 region spans residues 177–179; it reads SAL.

It belongs to the TRAFAC class translation factor GTPase superfamily. Classic translation factor GTPase family. EF-Tu/EF-1A subfamily. In terms of assembly, monomer.

The protein localises to the cytoplasm. The catalysed reaction is GTP + H2O = GDP + phosphate + H(+). Its function is as follows. GTP hydrolase that promotes the GTP-dependent binding of aminoacyl-tRNA to the A-site of ribosomes during protein biosynthesis. This Streptococcus pyogenes serotype M49 (strain NZ131) protein is Elongation factor Tu.